Here is a 641-residue protein sequence, read N- to C-terminus: DNA primase (641 aa).

The CHC2-type zinc-finger motif lies at 41 to 65 (CPFHDEKSPSFQVSPSKGFFHCFGC). In terms of domain architecture, Toprim spans 262–346 (SRAVVVEGYT…AAETYIAIAP (85 aa)). Glutamate 268, aspartate 317, and aspartate 319 together coordinate Mg(2+). Positions 444–478 (RDRGGKGPAPDQRQRGGGPQQQAGPMTATPRGPAL) are disordered.

The protein belongs to the DnaG primase family. Monomer. Interacts with DnaB. Zn(2+) is required as a cofactor. It depends on Mg(2+) as a cofactor.

The catalysed reaction is ssDNA + n NTP = ssDNA/pppN(pN)n-1 hybrid + (n-1) diphosphate.. Its function is as follows. RNA polymerase that catalyzes the synthesis of short RNA molecules used as primers for DNA polymerase during DNA replication. The protein is DNA primase of Streptomyces coelicolor (strain ATCC BAA-471 / A3(2) / M145).